Reading from the N-terminus, the 749-residue chain is Catalase-peroxidase (749 aa).

The segment covering 1–12 (MSSDTSDTRPPH) has biased composition (basic and acidic residues). Residues 1–40 (MSSDTSDTRPPHSDSGTQSNSESENPIIDSPEPKAHAPLT) are disordered. A compositionally biased stretch (polar residues) spans 14-24 (DSGTQSNSESE). Positions 113 to 240 (WHAAGTYRIF…FGATTMGLIY (128 aa)) form a cross-link, tryptophyl-tyrosyl-methioninium (Trp-Tyr) (with M-266). Histidine 114 acts as the Proton acceptor in catalysis. The tryptophyl-tyrosyl-methioninium (Tyr-Met) (with W-113) cross-link spans 240–266 (YVNPEGPEGKPDPLAAAHDIRETFGRM). Histidine 281 is a heme b binding site.

It belongs to the peroxidase family. Peroxidase/catalase subfamily. In terms of assembly, homodimer or homotetramer. Requires heme b as cofactor. Formation of the three residue Trp-Tyr-Met cross-link is important for the catalase, but not the peroxidase activity of the enzyme.

The enzyme catalyses H2O2 + AH2 = A + 2 H2O. The catalysed reaction is 2 H2O2 = O2 + 2 H2O. Its function is as follows. Bifunctional enzyme with both catalase and broad-spectrum peroxidase activity. The chain is Catalase-peroxidase from Mycobacterium sp. (strain JLS).